The following is a 163-amino-acid chain: Phosphopantetheine adenylyltransferase (163 aa).

Thr-9 is a binding site for substrate. ATP is bound by residues Thr-9–Phe-10 and His-17. Residues Lys-41, Thr-73, and Arg-87 each contribute to the substrate site. ATP contacts are provided by residues Gly-88–Arg-90, Glu-98, and Phe-123–Ser-129.

This sequence belongs to the bacterial CoaD family. As to quaternary structure, homohexamer. It depends on Mg(2+) as a cofactor.

It localises to the cytoplasm. The catalysed reaction is (R)-4'-phosphopantetheine + ATP + H(+) = 3'-dephospho-CoA + diphosphate. It participates in cofactor biosynthesis; coenzyme A biosynthesis; CoA from (R)-pantothenate: step 4/5. Functionally, reversibly transfers an adenylyl group from ATP to 4'-phosphopantetheine, yielding dephospho-CoA (dPCoA) and pyrophosphate. The sequence is that of Phosphopantetheine adenylyltransferase from Desulfitobacterium hafniense (strain Y51).